A 136-amino-acid chain; its full sequence is NADH-quinone oxidoreductase subunit A (136 aa).

A run of 3 helical transmembrane segments spans residues 20 to 40 (LAVY…VAWW), 70 to 90 (VPFY…AYIL), and 99 to 119 (LGWA…VGLV).

It belongs to the complex I subunit 3 family. NDH-1 is composed of 14 different subunits. Subunits NuoA, H, J, K, L, M, N constitute the membrane sector of the complex.

Its subcellular location is the cell inner membrane. The catalysed reaction is a quinone + NADH + 5 H(+)(in) = a quinol + NAD(+) + 4 H(+)(out). Its function is as follows. NDH-1 shuttles electrons from NADH, via FMN and iron-sulfur (Fe-S) centers, to quinones in the respiratory chain. The immediate electron acceptor for the enzyme in this species is believed to be ubiquinone. Couples the redox reaction to proton translocation (for every two electrons transferred, four hydrogen ions are translocated across the cytoplasmic membrane), and thus conserves the redox energy in a proton gradient. The chain is NADH-quinone oxidoreductase subunit A from Syntrophobacter fumaroxidans (strain DSM 10017 / MPOB).